Here is a 412-residue protein sequence, read N- to C-terminus: Putative competence-damage inducible protein (412 aa).

It belongs to the CinA family.

This chain is Putative competence-damage inducible protein, found in Bacillus cereus (strain ATCC 14579 / DSM 31 / CCUG 7414 / JCM 2152 / NBRC 15305 / NCIMB 9373 / NCTC 2599 / NRRL B-3711).